Consider the following 140-residue polypeptide: ATP synthase epsilon chain (140 aa).

The protein belongs to the ATPase epsilon chain family. In terms of assembly, F-type ATPases have 2 components, CF(1) - the catalytic core - and CF(0) - the membrane proton channel. CF(1) has five subunits: alpha(3), beta(3), gamma(1), delta(1), epsilon(1). CF(0) has three main subunits: a, b and c.

Its subcellular location is the cell inner membrane. In terms of biological role, produces ATP from ADP in the presence of a proton gradient across the membrane. The chain is ATP synthase epsilon chain from Xanthomonas campestris pv. campestris (strain 8004).